A 250-amino-acid polypeptide reads, in one-letter code: Small ribosomal subunit protein uS2 (250 aa).

Belongs to the universal ribosomal protein uS2 family.

The sequence is that of Small ribosomal subunit protein uS2 from Delftia acidovorans (strain DSM 14801 / SPH-1).